We begin with the raw amino-acid sequence, 250 residues long: MRVAATTRPASSSAAAPLPLFLLLAVAAAAAALFLVGSASLAMAGHVLGGAHDAPSAANSVETDALARFAVDEHNKRENALLEFVRVVEAKEQVVAGTLHHLTLEALEAGRKKVYEAKVWVKPWLDFKELQEFRNTGDATTFTNADLGAKKGGHEPGWRDVPVHDPVVKDAADHAVKSIQQRSNSLFPYELLEIVRAKAEVVEDFAKFDILMKLKRGNKEEKFKAEVHKNLEGAFVLNQMQQEHDESSSQ.

Positions methionine 1–alanine 32 are cleaved as a signal peptide. Cystatin domains lie at glycine 49–glycine 137 and proline 156–valine 202. The short motif at glutamine 93–glycine 97 is the Secondary area of contact element.

Belongs to the cystatin family. Phytocystatin subfamily.

The protein resides in the secreted. In terms of biological role, specific inhibitor of cysteine proteinases. Probably involved in the regulation of endogenous processes and in defense against pests and pathogens. In Oryza sativa subsp. japonica (Rice), this protein is Cysteine proteinase inhibitor 12.